A 359-amino-acid polypeptide reads, in one-letter code: MVDKLEAIKSRFDEVAEAILDPNIMSDMKRYASLNKEYKELNKIVEVYAQYKNILDNIESSKKVLSVEKDPDFREMAKEELETLAVQKDDIELVIKELLIPKDPNDSKNIILEIRGGTGGDEASIFAGDIFRMYQRYCDRMGWKMELIDATEGTSGGYKEIICGISGEDVYGKLKFESGVHRVQRVPATETQGRIHTSAASVAVLPEVEELDVQLNMNDIRKDTFCSSGPGGQSVNTTYSAIRLTHIPSGTVVQCQDEKSQIKNFEKALKVLRSRIYEIEYKKQQDELGKERNSMIGSGDRSDKIRTYNYPQSRVTDHRIGHTVHNLPAVMDGNIDDFIEELRLAENAERLKEGAQETA.

Position 233 is an N5-methylglutamine (Gln-233).

The protein belongs to the prokaryotic/mitochondrial release factor family. Post-translationally, methylated by PrmC. Methylation increases the termination efficiency of RF1.

Its subcellular location is the cytoplasm. Its function is as follows. Peptide chain release factor 1 directs the termination of translation in response to the peptide chain termination codons UAG and UAA. The polypeptide is Peptide chain release factor 1 (Cytophaga hutchinsonii (strain ATCC 33406 / DSM 1761 / CIP 103989 / NBRC 15051 / NCIMB 9469 / D465)).